Consider the following 449-residue polypeptide: Probable phosphoglucosamine mutase (449 aa).

Residue serine 96 is the Phosphoserine intermediate of the active site. Residues serine 96, aspartate 233, aspartate 235, and aspartate 237 each coordinate Mg(2+). Serine 96 carries the phosphoserine modification.

It belongs to the phosphohexose mutase family. Requires Mg(2+) as cofactor. In terms of processing, activated by phosphorylation.

It catalyses the reaction alpha-D-glucosamine 1-phosphate = D-glucosamine 6-phosphate. Its function is as follows. Catalyzes the conversion of glucosamine-6-phosphate to glucosamine-1-phosphate. Does not display phosphoglucomutase (PGM) or phosphomannomutase (PMM) activities. This Thermococcus kodakarensis (strain ATCC BAA-918 / JCM 12380 / KOD1) (Pyrococcus kodakaraensis (strain KOD1)) protein is Probable phosphoglucosamine mutase (glmM).